The primary structure comprises 460 residues: Vitamin K-dependent protein C (460 aa).

The signal sequence occupies residues 1 to 18 (MWQFRVFLLLMSTWGISS). The propeptide occupies 19–41 (IPAHPDPVFSSSEHAHQVLRVRR). Residues 42–87 (ANSFLEEMRPGSLERECMEEICDFEEAQEIFQNVEDTLAFWIKYFD) form the Gla domain. Residues glutamate 47, glutamate 48, glutamate 55, glutamate 57, glutamate 60, glutamate 61, glutamate 66, glutamate 67, glutamate 70, and glutamate 76 each carry the 4-carboxyglutamate modification. Cysteine 58 and cysteine 63 are joined by a disulfide. 9 disulfides stabilise this stretch: cysteine 91-cysteine 110, cysteine 100-cysteine 105, cysteine 104-cysteine 119, cysteine 121-cysteine 130, cysteine 139-cysteine 150, cysteine 146-cysteine 159, cysteine 161-cysteine 174, cysteine 182-cysteine 319, and cysteine 238-cysteine 254. 2 consecutive EGF-like domains span residues 96–131 (LDHQ…KFCQ) and 135–175 (RFQD…MRCK). Residue aspartate 112 is modified to (3R)-3-hydroxyaspartate. Positions 213–449 (VNGTLTKQGD…YLKWIHSYIG (237 aa)) constitute a Peptidase S1 domain. Residue asparagine 214 is glycosylated (N-linked (GlcNAc...) asparagine). Residue histidine 253 is the Charge relay system of the active site. The N-linked (GlcNAc...) asparagine glycan is linked to asparagine 290. Aspartate 299 acts as the Charge relay system in catalysis. An N-linked (GlcNAc...) asparagine glycan is attached at asparagine 354. 2 disulfide bridges follow: cysteine 372–cysteine 386 and cysteine 397–cysteine 425. The active-site Charge relay system is the serine 401.

Belongs to the peptidase S1 family. As to quaternary structure, synthesized as a single chain precursor, which is cleaved into a light chain and a heavy chain held together by a disulfide bond. The enzyme is then activated by thrombin, which cleaves a tetradecapeptide from the amino end of the heavy chain; this reaction, which occurs at the surface of endothelial cells, is strongly promoted by thrombomodulin. In terms of processing, the vitamin K-dependent, enzymatic carboxylation of some Glu residues allows the modified protein to bind calcium. Post-translationally, the iron and 2-oxoglutarate dependent 3-hydroxylation of aspartate and asparagine is (R) stereospecific within EGF domains. In terms of tissue distribution, plasma; synthesized in the liver.

It localises to the secreted. The protein localises to the golgi apparatus. The protein resides in the endoplasmic reticulum. The enzyme catalyses Degradation of blood coagulation factors Va and VIIIa.. Functionally, protein C is a vitamin K-dependent serine protease that regulates blood coagulation by inactivating factors Va and VIIIa in the presence of calcium ions and phospholipids. Exerts a protective effect on the endothelial cell barrier function. This is Vitamin K-dependent protein C (Proc) from Mus musculus (Mouse).